The sequence spans 328 residues: Phenylalanine--tRNA ligase alpha subunit (328 aa).

Position 253 (Glu253) interacts with Mg(2+).

It belongs to the class-II aminoacyl-tRNA synthetase family. Phe-tRNA synthetase alpha subunit type 1 subfamily. Tetramer of two alpha and two beta subunits. It depends on Mg(2+) as a cofactor.

It localises to the cytoplasm. The catalysed reaction is tRNA(Phe) + L-phenylalanine + ATP = L-phenylalanyl-tRNA(Phe) + AMP + diphosphate + H(+). The polypeptide is Phenylalanine--tRNA ligase alpha subunit (Coxiella burnetii (strain CbuG_Q212) (Coxiella burnetii (strain Q212))).